The chain runs to 404 residues: Keratin, type I cuticular Ha3-I (404 aa).

The tract at residues 1-56 (MSYSCGLPNLSCRTSCSSRPCVPPSCHGCTLPGACNIPANVSNCNWFCEGSFNGSE) is head. Residues 56–367 (EKETMQFLND…SLLESEDCKL (312 aa)) form the IF rod domain. The tract at residues 57-91 (KETMQFLNDRLASYLEKVRQLERDNAELENLIRER) is coil 1A. Residues 92 to 102 (SQQQEPLVCAS) form a linker 1 region. The segment at 103 to 203 (YQSYFKTIEE…HEQEVNTLRC (101 aa)) is coil 1B. Residues 204–219 (QLGGRLNVEVDAAPAV) form a linker 12 region. A coil 2 region spans residues 220-363 (DLNQVLNETR…NTYRSLLESE (144 aa)). A tail region spans residues 364–404 (DCKLPSNPCAITNACDKSTGPCISNPCGPRARCGPCNTFGY).

This sequence belongs to the intermediate filament family.

The sequence is that of Keratin, type I cuticular Ha3-I from Pan troglodytes (Chimpanzee).